The chain runs to 419 residues: MDYLPVEVIGNILSRLGGARDVVIASATCRKWREACRKHLQTLSFNSADWPFYRDLTTNRLEILITQTIFQTMGLQGLSIMMDDANKFSAATVIAWLMYTRDTLRRLSYNVRTTPNVNILEICGRQKLEALVLAHNSITGVEPSFQRFPCLKSLSLSYVSISALDLNLLLSACPMIESLELVSLEIAMSDAQVTIELSSPTLKSVYFDGISLDKFILEADSIEFLHMKDCVLELFELIGNGTLKHFKLDDVSVIHLDIMETSESLEVVDVNHFTMVWPKFYQMISRSQKLKKLRLWDVVFDDDDEIIDVESIAAGFSHLTHLSLSYDLKDGAAHYSLQGTTQLENVTVLELGWTVINDVFSIWVEELLRRCPNLKKLIIYGVVSETKTQGDCQILATFTWSIVQLMRKYIHVEVQFEYE.

In terms of domain architecture, F-box spans 1 to 48; it reads MDYLPVEVIGNILSRLGGARDVVIASATCRKWREACRKHLQTLSFNSA. 9 LRR repeats span residues 53–82, 96–124, 133–157, 158–183, 185–209, 245–272, 273–297, 301–326, and 356–381; these read YRDL…SIMM, WLMY…EICG, LAHN…LSLS, YVSI…ELVS, EIAM…YFDG, HFKL…DVNH, FTMV…RLWD, DDDD…SLSY, and INDV…IIYG.

The protein is F-box/LRR-repeat protein At1g67190 of Arabidopsis thaliana (Mouse-ear cress).